The primary structure comprises 74 residues: Exodeoxyribonuclease 7 small subunit (74 aa).

It belongs to the XseB family. As to quaternary structure, heterooligomer composed of large and small subunits.

It is found in the cytoplasm. The enzyme catalyses Exonucleolytic cleavage in either 5'- to 3'- or 3'- to 5'-direction to yield nucleoside 5'-phosphates.. In terms of biological role, bidirectionally degrades single-stranded DNA into large acid-insoluble oligonucleotides, which are then degraded further into small acid-soluble oligonucleotides. This chain is Exodeoxyribonuclease 7 small subunit, found in Clostridium beijerinckii (strain ATCC 51743 / NCIMB 8052) (Clostridium acetobutylicum).